Here is a 333-residue protein sequence, read N- to C-terminus: Foldase protein PrsA (333 aa).

A signal peptide spans 1 to 22 (MKKSTKLLAGIVTLASAMTLAA). A lipid anchor (N-palmitoyl cysteine) is attached at Cys23. Cys23 is lipidated: S-diacylglycerol cysteine. Positions 145–240 (TPEMTTQVIT…NKFYIVKVTK (96 aa)) constitute a PpiC domain. A disordered region spans residues 301 to 333 (DKKASKANTSKSDQKTSSDSSKDSQSSKSKSEK). The span at 312–322 (SDQKTSSDSSK) shows a compositional bias: basic and acidic residues. The span at 323-333 (DSQSSKSKSEK) shows a compositional bias: low complexity.

It belongs to the PrsA family.

It is found in the cell membrane. It carries out the reaction [protein]-peptidylproline (omega=180) = [protein]-peptidylproline (omega=0). Its function is as follows. Plays a major role in protein secretion by helping the post-translocational extracellular folding of several secreted proteins. In Streptococcus equi subsp. zooepidemicus (strain MGCS10565), this protein is Foldase protein PrsA.